The following is a 94-amino-acid chain: Endoribonuclease VapD 2 (94 aa).

This sequence belongs to the VapD ribonuclease family. As to quaternary structure, homodimer.

Cleaves ssRNA, mostly between U:A. The protein is Endoribonuclease VapD 2 of Riemerella anatipestifer (Moraxella anatipestifer).